Consider the following 786-residue polypeptide: Endonuclease MutS2 (786 aa).

335 to 342 (GPNTGGKT) is a binding site for ATP. The interval 529–549 (SQKNAERERKEAEEHRKQSEK) is disordered. The Smr domain maps to 711–786 (LDLRGERYED…GLGVTVVELK (76 aa)).

Belongs to the DNA mismatch repair MutS family. MutS2 subfamily. As to quaternary structure, homodimer. Binds to stalled ribosomes, contacting rRNA.

In terms of biological role, endonuclease that is involved in the suppression of homologous recombination and thus may have a key role in the control of bacterial genetic diversity. Functionally, acts as a ribosome collision sensor, splitting the ribosome into its 2 subunits. Detects stalled/collided 70S ribosomes which it binds and splits by an ATP-hydrolysis driven conformational change. Acts upstream of the ribosome quality control system (RQC), a ribosome-associated complex that mediates the extraction of incompletely synthesized nascent chains from stalled ribosomes and their subsequent degradation. Probably generates substrates for RQC. The sequence is that of Endonuclease MutS2 from Bacillus mycoides (strain KBAB4) (Bacillus weihenstephanensis).